Here is a 64-residue protein sequence, read N- to C-terminus: Large ribosomal subunit protein bL28 (64 aa).

The tract at residues 1 to 23 (MARKDQISHRGPLSGNNRSHALN) is disordered.

This sequence belongs to the bacterial ribosomal protein bL28 family.

In Mesomycoplasma hyopneumoniae (strain J / ATCC 25934 / NCTC 10110) (Mycoplasma hyopneumoniae), this protein is Large ribosomal subunit protein bL28.